The primary structure comprises 545 residues: Chaperonin GroEL 2 (545 aa).

ATP-binding positions include 29–32 (TLGP), 86–90 (DGTTT), Gly-414, and Asp-499.

Belongs to the chaperonin (HSP60) family. Forms a cylinder of 14 subunits composed of two heptameric rings stacked back-to-back. Interacts with the co-chaperonin GroES.

It is found in the cytoplasm. The enzyme catalyses ATP + H2O + a folded polypeptide = ADP + phosphate + an unfolded polypeptide.. Together with its co-chaperonin GroES, plays an essential role in assisting protein folding. The GroEL-GroES system forms a nano-cage that allows encapsulation of the non-native substrate proteins and provides a physical environment optimized to promote and accelerate protein folding. This chain is Chaperonin GroEL 2, found in Chloroflexus aurantiacus (strain ATCC 29366 / DSM 635 / J-10-fl).